Here is a 106-residue protein sequence, read N- to C-terminus: Thiosulfate sulfurtransferase GlpE (106 aa).

The Rhodanese domain maps to 17–105 (EQSEAKLVDI…WQRAELPIVR (89 aa)). The active-site Cysteine persulfide intermediate is C65.

Belongs to the GlpE family.

Its subcellular location is the cytoplasm. It carries out the reaction thiosulfate + hydrogen cyanide = thiocyanate + sulfite + 2 H(+). It catalyses the reaction thiosulfate + [thioredoxin]-dithiol = [thioredoxin]-disulfide + hydrogen sulfide + sulfite + 2 H(+). Its function is as follows. Transferase that catalyzes the transfer of sulfur from thiosulfate to thiophilic acceptors such as cyanide or dithiols. May function in a CysM-independent thiosulfate assimilation pathway by catalyzing the conversion of thiosulfate to sulfite, which can then be used for L-cysteine biosynthesis. This is Thiosulfate sulfurtransferase GlpE from Vibrio campbellii (strain ATCC BAA-1116).